The sequence spans 364 residues: 2-oxoadipate dioxygenase/decarboxylase, chloroplastic/amyloplastic (364 aa).

A chloroplast-targeting transit peptide spans 1–49 (MAVALAGARSPGAGAILSLRRLAPAAAAPVRLGGSGTPGTRRRRGIAMA). Positions 107 and 111 each coordinate 2-oxoadipate. Residue His107 coordinates Fe(2+). A Fe(2+)-binding site is contributed by His243. The 2-oxoadipate site is built by Gln289 and Tyr313. Residue Glu315 participates in Fe(2+) binding.

The protein belongs to the 2-oxoadipate dioxygenase/decarboxylase family. Requires Fe(2+) as cofactor. In terms of tissue distribution, expressed in roots, stems, leaf sheaths, leaf blades, panicles, and endosperm.

The protein resides in the plastid. Its subcellular location is the chloroplast. The protein localises to the amyloplast. It carries out the reaction 2-oxoadipate + O2 = (R)-2-hydroxyglutarate + CO2. The protein operates within amino-acid degradation. In terms of biological role, catalyzes the decarboxylation and hydroxylation of 2-oxoadipate (2OA) to form D-2-hydroxyglutarate (D-2-HGA). Is involved in a D-lysine catabolic pathway. Involved in the regulation of starch synthesis and amyloplast development within the peripheral endosperm during the grain-filling stage. The polypeptide is 2-oxoadipate dioxygenase/decarboxylase, chloroplastic/amyloplastic (Oryza sativa subsp. japonica (Rice)).